We begin with the raw amino-acid sequence, 87 residues long: Stannin (87 aa).

At 1 to 10 (MSIMDHSPTT) the chain is on the mitochondrial intermembrane side. A helical transmembrane segment spans residues 11–31 (GVVTVIVILIAIAALGALILG). At 32-87 (CWCYLRLQRISQSEDEESIVGDGETKEPFLLVQYSAKGPCVERKAKLTPNGPEVHS) the chain is on the cytoplasmic side. Phosphoserine is present on Ser-49.

The protein belongs to the stannin family. Monomer.

The protein localises to the mitochondrion outer membrane. Its function is as follows. Plays a role in the toxic effects of organotins. Plays a role in endosomal maturation. The polypeptide is Stannin (SNN) (Bos taurus (Bovine)).